We begin with the raw amino-acid sequence, 85 residues long: HssA/B-like protein 59 (85 aa).

The protein belongs to the hssA/B family.

In Dictyostelium discoideum (Social amoeba), this protein is HssA/B-like protein 59 (hssl59).